Consider the following 342-residue polypeptide: Serine/threonine-protein kinase-transforming protein mos (342 aa).

Residues 63–338 (VCLMHRLGSG…LLQRDLKAFR (276 aa)) form the Protein kinase domain. ATP contacts are provided by residues 69-77 (LGSGGFGSV) and K90. The Proton acceptor role is filled by D198.

The protein belongs to the protein kinase superfamily. Ser/Thr protein kinase family.

It catalyses the reaction L-seryl-[protein] + ATP = O-phospho-L-seryl-[protein] + ADP + H(+). The catalysed reaction is L-threonyl-[protein] + ATP = O-phospho-L-threonyl-[protein] + ADP + H(+). The chain is Serine/threonine-protein kinase-transforming protein mos (V-MOS) from Myeloproliferative sarcoma virus (isolate ts159).